The primary structure comprises 502 residues: Ubiquilin (502 aa).

The 76-residue stretch at 8 to 83 (IKVHVKSPSN…VHLVIRNQAR (76 aa)) folds into the Ubiquitin-like domain. Low complexity predominate over residues 84–115 (PTPAPAAATPTASSAPSSNPTPSSQPNPTNNP). Residues 84-136 (PTPAPAAATPTASSAPSSNPTPSSQPNPTNNPFAAMGGMGSPADILNNPDAMR) are disordered. 2 STI1 domains span residues 124-157 (SPADILNNPDAMRSVMDNPITQQLLGNPEFMRTI) and 161-200 (NPQFQALIERNPEVGHILNDPNVMRQTMEMIRNPNMFQEM). The segment covering 235–251 (SATNSLSGNPFASLRGD) has biased composition (polar residues). Positions 235 to 294 (SATNSLSGNPFASLRGDQSSEPRVDRAGQENNEALPNPWASNANQATNNQSNNRSADFNS) are disordered. Basic and acidic residues predominate over residues 252 to 262 (QSSEPRVDRAG). Residues 274 to 290 (ASNANQATNNQSNNRSA) are compositionally biased toward low complexity. 2 consecutive STI1 domains span residues 289-327 (SADFNSLLDSPGISSLMEQMMSNPSMQASMFSPEVINSI) and 351-387 (NPQISEGIRRSFPQMLNMMSDPSVMEAMRNPRVSEAF). Residues 455–501 (PVNPEQTYASQLEQLQSMGFSDRARNVAALTATFGDLNAAVERLLNS) enclose the UBA domain.

In terms of tissue distribution, expressed in the pharynx, hypodermis, intestine and head neurons. Upon ER stress, expressed predominantly in pharyngeal muscle, hypodermis and intestine.

Functionally, may play a role in the ER-associated protein degradation pathway (ERAD) possibly via its interaction with ER-localized proteins ubxn-4 and cdc-48.1 and/or cdc48.2, providing a link between the polyubiquitinated ERAD substrates and the proteasome. Also plays an important role in the regulation of other protein degradation mechanisms and pathways including ubiquitin-proteasome system (UPS) and autophagy. Mediates the proteasomal targeting of misfolded or accumulated proteins for degradation by binding (via UBA domain) to their polyubiquitin chains and by interacting (via ubiquitin-like domain) with the subunits of the proteasome. Collaborates with POST (F36D4.5) in the export of ubiquitinated proteins from the nucleus to the cytoplasm. Also acts as a regulator of DNA repair by inhibiting homologous recombination repair, thereby redirecting double-strand break repair toward non-homologous end joining (NHEJ). In Caenorhabditis elegans, this protein is Ubiquilin.